Reading from the N-terminus, the 131-residue chain is Fluoride-specific ion channel FluC 1 (131 aa).

The next 4 helical transmembrane spans lie at 4 to 24, 40 to 60, 73 to 93, and 108 to 128; these read LALPAWQASLVAIGAVPGAWL, HWGTFAVNMVAAFALGLVLAL, LILLIGVGFFGSLSTFSTFAV, and LVLAVGSILGGLLAVAAGVGL. The Na(+) site is built by Gly-83 and Ser-86.

The protein belongs to the fluoride channel Fluc/FEX (TC 1.A.43) family.

It is found in the cell inner membrane. It carries out the reaction fluoride(in) = fluoride(out). With respect to regulation, na(+) is not transported, but it plays an essential structural role and its presence is essential for fluoride channel function. Its function is as follows. Fluoride-specific ion channel. Important for reducing fluoride concentration in the cell, thus reducing its toxicity. The polypeptide is Fluoride-specific ion channel FluC 1 (Prochlorococcus marinus (strain MIT 9313)).